A 395-amino-acid polypeptide reads, in one-letter code: Multidrug resistance protein MdtL (395 aa).

The next 12 membrane-spanning stretches (helical) occupy residues 4-24 (FLLCSFALVLLYPAGIDMYLV), 42-62 (IAFSVYLAGMATAMLFAGKIA), 69-89 (PVAIVGAIVFMMASLLCSRAS), 93-113 (LFLSGRFLQGIGAGGCYVVAF), 131-151 (LLNGITCIVPVLAPVVGHLIM), 158-178 (SLFYTMSAMGIIVGLLSLFIL), 217-237 (VSVILTFVNASPVLLMEVMGF), 247-267 (ALTAGVSMVVSFSTPFALGLF), 271-291 (TLMLVSQGLFLTAGVTLSLAH), 295-315 (VTLFGLTLICAGFSVGFGVAM), 328-350 (VASSTLGIAQVCGSSLWIWLAAI), and 355-377 (AMNMLIGILIGCSIVSILLIFSV).

It belongs to the major facilitator superfamily. DHA1 family. MdtL (TC 2.A.1.2.22) subfamily.

It is found in the cell inner membrane. In Salmonella dublin (strain CT_02021853), this protein is Multidrug resistance protein MdtL.